The following is a 570-amino-acid chain: MALVRFATIITVLCHLAIQDGAAKSFPHGEKAPFPLTLIHINDLHARFDETNQKSSTCTNSKECIAGIARVYHTIKQLKSEYKTKNPLYLNAGDNFQGTLWYNLLRWNVTAYFIKELPPDAMTLGNHEFDHSPKGLAPYLAELEKMKIPTVVANLEKNGEPALKDSKIARSIVLKVGNRKVGVIGALYDKTHLVAQTGMVTLTNSIEAVRKEAQELKKKNVNIIVVLSHCGLDGDKQLAEEAGDLIDVIVGAHSHSLLLNKDAKVPYDTKYDTIEGDYPLVVKKSNNHTVLITQARSFGKYVGRLTVNFDCEGEVQSWEGYPIYMNNSVKQDEEVLRELEPWRAEVKRLGTQVIGTTEVFLDRESCRWCECTLGDLIADAYADQYTNSTVQPVAFVQAGNFRNPIEKGDITNGLAIEAAPYGSSVDMIKLSGADLWSAIDHSFTLDDEFRYNTAQVSGMAVVADLSKKPYERVQSIDIVGANGAKTALKKDQIYYVVVPSYLADGKDGFAMLKKGTNRVTGPLDSDVLIEYVRKRQTIAKTMFQEKRVVIENHTNGTCSWDLDSQRYKPK.

Residues 1–23 (MALVRFATIITVLCHLAIQDGAA) form the signal peptide. A divalent metal cation is bound by residues D43, H45, and D94. Residue N108 is glycosylated (N-linked (GlcNAc...) asparagine). A divalent metal cation is bound by residues N126, H229, and H253. 2 N-linked (GlcNAc...) asparagine glycosylation sites follow: N287 and N326. Residue R367 participates in AMP binding. N387 carries N-linked (GlcNAc...) asparagine glycosylation. R402 and D507 together coordinate AMP. N-linked (GlcNAc...) asparagine glycans are attached at residues N552 and N555.

The protein belongs to the 5'-nucleotidase family. As to quaternary structure, interacts with human PLAT; the interaction results in PLAT activation probably via an allosteric activation mechanism. It depends on a divalent metal cation as a cofactor. In terms of tissue distribution, saliva (at protein level). Salivary gland (at protein level). Not detected in midgut.

It localises to the secreted. It carries out the reaction a ribonucleoside 5'-triphosphate + 2 H2O = a ribonucleoside 5'-phosphate + 2 phosphate + 2 H(+). Its function is as follows. Cleaves adenosine triphosphate (ATP) and adenosine diphosphate (ADP) to adenosine monophosphate (AMP) and inorganic phosphate. Enhances fibrin degradation in the midgut blood bolus. Activates human tissue plasminogen activator (PLAT), probably via an allosteric activation mechanism. Inhibits ADP-mediated host platelet aggregation in vitro and in mosquito midgut. Inhibits host neutrophil activation in the mosquito midgut: reduces neutrophil extracellular traps formation in the presence of platelets and the formation of total cell- and mitochondrial-derived reactive oxygen species. (Microbial infection) Promotes Plasmodium berghei parasite transmission from the mammalian host to the mosquito probably by reducing the blood bolus viscosity. Facilitates sporozoite transmission from the mosquito to the mammalian host during blood feeding. The polypeptide is Apyrase (Anopheles gambiae (African malaria mosquito)).